The chain runs to 293 residues: MNIRGAPDLGQPSDDPSSGGERERIRQRMKMVIGQLEGILRELKEVAKELREVVSQIDKLTSDFDFELEPDDWTTATVSSTSSSDKAGMGGPFDLGHLDFMTADILSDSWEFCSFLDVSTPSDSVDGPESTRPGAGPDYRLMNGGTPIPNGPRVETPDSSSEEAFGAGPTVKSQLPQRTPGTRERVRFSDKVLYHALCCDDEEGDGEQEVEEEEVGLPPEPAHTEAHAGPHKPSPAPYKSRRSPLTSRHSGSTLAPEQTRRVTRNSSTQTVSDKSTQTVLPYTATRQKARGKN.

The segment at 1–26 (MNIRGAPDLGQPSDDPSSGGERERIR) is disordered. The stretch at 30 to 63 (KMVIGQLEGILRELKEVAKELREVVSQIDKLTSD) forms a coiled coil. Disordered regions lie at residues 120–186 (TPSD…RERV) and 200–293 (DDEE…RGKN). Residues 171–180 (VKSQLPQRTP) are compositionally biased toward polar residues. Acidic residues predominate over residues 200-215 (DDEEGDGEQEVEEEEV). Composition is skewed to polar residues over residues 243-256 (SPLTSRHSGSTLAP) and 264-286 (RNSSTQTVSDKSTQTVLPYTATR).

The protein belongs to the INSYN1 family. In terms of assembly, interacts with GPHN.

The protein resides in the postsynaptic density. In terms of biological role, component of the protein machinery at the inhibitory synapses, probably acting as a scaffold. Inhibitory synapses dampen neuronal activity through postsynaptic hyperpolarization. This synaptic inhibition is fundamental for the functioning of the central nervous system, shaping and orchestrating the flow of information through neuronal networks to generate a precise neural code. The sequence is that of Inhibitory synaptic factor 1 from Homo sapiens (Human).